Reading from the N-terminus, the 837-residue chain is Striatin-interacting protein 1 (837 aa).

Met-1 carries the N-acetylmethionine modification. The interval 1 to 67 is disordered; that stretch reads MEPAAGTPGP…DSEGYSESPD (67 aa). A compositionally biased stretch (pro residues) spans 18 to 35; it reads PQPPPPPPPATAQPPPGA. Residues 47 to 60 show a composition bias toward basic and acidic residues; the sequence is KAREFNRNQRKDSE. Phosphoserine is present on residues Ser-59, Ser-335, and Ser-339. The interval 336–423 is disordered; sequence PPASASDLIE…DRLTCPKGLP (88 aa). Positions 356–377 are enriched in basic and acidic residues; sequence KALIKQDNLDAFNERDPYKADD. The segment covering 378–391 has biased composition (acidic residues); that stretch reads SREEEEENDDDNSL. Ser-788 is modified (phosphoserine). The required for STRIPAK core complex formation stretch occupies residues 796–837; that stretch reads DNCLQSVLGQRVDLPEDFQMNYDLWLEREVFSKPISWEELLQ.

This sequence belongs to the STRIP family. As to quaternary structure, part of the core of STRIPAK complexes composed of PP2A catalytic and scaffolding subunits, the striatins (PP2A regulatory subunits), the striatin-associated proteins MOB4, STRIP1 and STRIP2, PDCD10 and members of the STE20 kinases, such as STK24 and STK26. The STRIPAK complex can be extended by adapter proteins such as SLMAP:SIKE1, CTTNBP2 or CTTNBP2NL. Interacts with CDC42BPB. Interacts with CTTNBP2NL.

Its subcellular location is the cytoplasm. Its function is as follows. Plays a role in the regulation of cell morphology and cytoskeletal organization. Required in the cortical actin filament dynamics and cell shape. Part of the striatin-interacting phosphatase and kinase (STRIPAK) complexes. STRIPAK complexes have critical roles in protein (de)phosphorylation and are regulators of multiple signaling pathways including Hippo, MAPK, nuclear receptor and cytoskeleton remodeling. Different types of STRIPAK complexes are involved in a variety of biological processes such as cell growth, differentiation, apoptosis, metabolism and immune regulation. This Bos taurus (Bovine) protein is Striatin-interacting protein 1 (STRIP1).